The sequence spans 1014 residues: Collagen alpha-1(I) chain (1014 aa).

The segment at 1 to 1014 (SYGYDEKGGI…PGPPGPPGPP (1014 aa)) is disordered. Low complexity predominate over residues 9–22 (GISVPGPMGPSGPR). Pro-25, Pro-28, Pro-30, Pro-39, Pro-42, Pro-45, Pro-60, Pro-75, Pro-81, Pro-90, and Pro-96 each carry 4-hydroxyproline. Residues 33–51 (QGFQGPPGEPGEPGSSGPM) are compositionally biased toward low complexity. Residues 63-77 (NGDDGEAGKPGRPGE) are compositionally biased toward basic and acidic residues. 5-hydroxylysine; alternate is present on Lys-99. The O-linked (Gal...) hydroxylysine; alternate glycan is linked to Lys-99. A Phosphoserine modification is found at Ser-105. Positions 113–129 (DAGPAGPKGEPGSPGEN) are enriched in low complexity. Pro-123, Pro-126, Pro-132, Pro-141, Pro-147, Pro-168, Pro-177, Pro-180, Pro-207, Pro-210, Pro-222, Pro-228, Pro-237, Pro-243, Pro-246, and Pro-261 each carry 4-hydroxyproline. Positions 147–165 (PGASGPAGARGNDGATGAA) are enriched in low complexity. A compositionally biased stretch (pro residues) spans 167–179 (PPGPTGPAGPPGF). The span at 213–252 (AGAAGPAGNPGADGQPGAKGANGAPGIAGAPGFPGARGPS) shows a compositional bias: low complexity. Lys-264 carries the 5-hydroxylysine modification. 8 positions are modified to 4-hydroxyproline: Pro-270, Pro-273, Pro-285, Pro-294, Pro-309, Pro-315, Pro-324, and Pro-330. Residues 319–328 (GERGGPGSRG) show a composition bias toward gly residues. The residue at position 339 (Lys-339) is a 5-hydroxylysine. 4-hydroxyproline occurs at positions 348, 357, 363, 369, 378, 381, 390, 399, 405, 417, 426, 435, 438, 456, 473, 479, 485, 491, 497, 503, 515, 524, 535, 548, 554, and 563. The span at 372 to 398 (KGLTGSPGSPGPDGKTGPPGPAGQDGR) shows a compositional bias: low complexity. The span at 407–426 (ARGQAGVMGFPGPKGAAGEP) shows a compositional bias: low complexity. Positions 485 to 494 (PGEAGKPGEQ) are enriched in low complexity. Lys-575 is subject to 5-hydroxylysine. Pro-581, Pro-596, and Pro-602 each carry 4-hydroxyproline. Positions 608–622 (SGPSGPAGPTGARGA) are enriched in low complexity. Position 611 is a phosphoserine (Ser-611). 4-hydroxyproline occurs at positions 623, 629, 632, 641, 647, 674, and 683. The segment covering 635–665 (AGFAGPPGADGQPGAKGEPGDAGAKGDAGPS) has biased composition (low complexity). Lys-686 carries the 5-hydroxylysine modification. Low complexity predominate over residues 691-707 (SAGPPGATGFPGAAGRV). 4-hydroxyproline is present on residues Pro-695 and Pro-701. Pro-709 carries the post-translational modification 3-hydroxyproline. Residues Pro-710, Pro-719, Pro-722, Pro-743, Pro-752, Pro-760, Pro-769, Pro-787, Pro-796, Pro-799, Pro-805, Pro-820, Pro-826, Pro-832, Pro-841, and Pro-847 each carry the 4-hydroxyproline modification. Residues 736–745 (ETGPAGRPGE) show a composition bias toward low complexity. The segment covering 757 to 769 (KGSPGADGPAGAP) has biased composition (low complexity). Pro residues predominate over residues 819 to 829 (PPGPVGPPGLA). Lys-856 carries the 5-hydroxylysine modification. Positions 864 to 879 (PGPPGAPGAPGAPGPV) are enriched in pro residues. 3 positions are modified to 4-hydroxyproline: Pro-867, Pro-870, and Pro-873. The segment covering 900 to 914 (AGPAGARGPAGPQGP) has biased composition (low complexity). Basic and acidic residues predominate over residues 915 to 929 (RGDKGETGEQGDRGI). The residue at position 918 (Lys-918) is a 5-hydroxylysine. Lys-930 bears the 5-hydroxylysine; alternate mark. Lys-930 is a glycosylation site (O-linked (Gal...) hydroxylysine; alternate). 4-hydroxyproline is present on residues Pro-945, Pro-948, Pro-966, and Pro-981. Over residues 948–981 (PGEQGPSGASGPAGPRGPPGSAGSPGKDGLNGLP) the composition is skewed to low complexity. Pro-986 carries the 3-hydroxyproline modification. Pro-987 bears the 4-hydroxyproline mark. Residues 999-1014 (VGPPGPPGPPGPPGPP) are compositionally biased toward pro residues. Position 1001 is a 3-hydroxyproline (Pro-1001). Pro-1002 bears the 4-hydroxyproline mark. Pro-1004 is modified (3-hydroxyproline). Pro-1005 is modified (4-hydroxyproline). A 3-hydroxyproline modification is found at Pro-1007. 4-hydroxyproline is present on residues Pro-1008, Pro-1011, and Pro-1014.

This sequence belongs to the fibrillar collagen family. As to quaternary structure, trimers of one alpha 2(I) and two alpha 1(I) chains. Contains mostly 4-hydroxyproline. Proline residues at the third position of the tripeptide repeating unit (G-X-Y) are hydroxylated in some or all of the chains. In terms of processing, contains 3-hydroxyproline at a few sites. This modification occurs on the first proline residue in the sequence motif Gly-Pro-Hyp, where Hyp is 4-hydroxyproline. Post-translationally, lysine residues at the third position of the tripeptide repeating unit (G-X-Y) are 5-hydroxylated in some or all of the chains. O-glycosylated on hydroxylated lysine residues. The O-linked glycan consists of a Glc-Gal disaccharide. As to expression, expressed in bones.

The protein localises to the secreted. The protein resides in the extracellular space. It localises to the extracellular matrix. Its function is as follows. Type I collagen is a member of group I collagen (fibrillar forming collagen). This is Collagen alpha-1(I) chain from Megatherium americanum (Giant ground sloth).